Reading from the N-terminus, the 261-residue chain is MATSSSVAAASKRGGGLYWALLSVPVVTFGLGTWQIFRKQQKEELIATLEAKLSKEPAALPTNPADLAHMEYERVAVTGTFLHDQEMLVGPRTVTREVFSGMADLPEAGVQVITPFRLADTGEVILVNRGFVPEAQAPPHKRAAGQVEGTVRLEGIVRHGESQTAFVPDNHPEQNTWYWIDVFTMASNRSALPVLIDATAECTPPGGFPLGGQTNITVRNEHLSYIITWYSISAITLAMWVFLRRKGGNRSGLRAPPPRRT.

The next 2 membrane-spanning stretches (helical) occupy residues 17–37 and 223–243; these read LYWALLSVPVVTFGLGTWQIF and LSYIITWYSISAITLAMWVFL.

This sequence belongs to the SURF1 family.

It is found in the mitochondrion inner membrane. Probably involved in the biogenesis of the COX complex. This chain is SURF1-like protein, found in Monosiga brevicollis (Choanoflagellate).